Here is a 416-residue protein sequence, read N- to C-terminus: Serine hydroxymethyltransferase (416 aa).

Residues leucine 121 and 125-127 (GHL) contribute to the (6S)-5,6,7,8-tetrahydrofolate site. Lysine 229 carries the post-translational modification N6-(pyridoxal phosphate)lysine.

The protein belongs to the SHMT family. As to quaternary structure, homodimer. The cofactor is pyridoxal 5'-phosphate.

The protein resides in the cytoplasm. It catalyses the reaction (6R)-5,10-methylene-5,6,7,8-tetrahydrofolate + glycine + H2O = (6S)-5,6,7,8-tetrahydrofolate + L-serine. It functions in the pathway one-carbon metabolism; tetrahydrofolate interconversion. Its pathway is amino-acid biosynthesis; glycine biosynthesis; glycine from L-serine: step 1/1. Functionally, catalyzes the reversible interconversion of serine and glycine with tetrahydrofolate (THF) serving as the one-carbon carrier. This reaction serves as the major source of one-carbon groups required for the biosynthesis of purines, thymidylate, methionine, and other important biomolecules. Also exhibits THF-independent aldolase activity toward beta-hydroxyamino acids, producing glycine and aldehydes, via a retro-aldol mechanism. In Aromatoleum aromaticum (strain DSM 19018 / LMG 30748 / EbN1) (Azoarcus sp. (strain EbN1)), this protein is Serine hydroxymethyltransferase.